The sequence spans 495 residues: Glucose-6-phosphate 1-dehydrogenase (495 aa).

The residue at position 1 (serine 1) is an N-acetylserine. Residues 15-22 (GASGDLAR), arginine 49, and lysine 149 contribute to the NADP(+) site. D-glucose 6-phosphate is bound by residues lysine 149, 179 to 183 (HYLGK), glutamate 217, and aspartate 236. The active-site Proton acceptor is histidine 241. Arginine 332 is a binding site for NADP(+). D-glucose 6-phosphate is bound at residue lysine 335. 3 residues coordinate NADP(+): lysine 341, arginine 345, and arginine 367. Residue glutamine 369 coordinates D-glucose 6-phosphate. NADP(+)-binding positions include 375–377 (YLK), 395–397 (DLT), and lysine 463.

It belongs to the glucose-6-phosphate dehydrogenase family.

It catalyses the reaction D-glucose 6-phosphate + NADP(+) = 6-phospho-D-glucono-1,5-lactone + NADPH + H(+). The protein operates within carbohydrate degradation; pentose phosphate pathway; D-ribulose 5-phosphate from D-glucose 6-phosphate (oxidative stage): step 1/3. Its function is as follows. Catalyzes the rate-limiting step of the oxidative pentose-phosphate pathway, which represents a route for the dissimilation of carbohydrates besides glycolysis. The main function of this enzyme is to provide reducing power (NADPH) and pentose phosphates for fatty acid and nucleic acid synthesis. This Cyberlindnera jadinii (Torula yeast) protein is Glucose-6-phosphate 1-dehydrogenase.